The chain runs to 397 residues: Penicillopepsin-1 (397 aa).

The signal sequence occupies residues 1–20 (MVVFSQVTVALTCFSAIASA). Residues 21 to 71 (AAVRQEPPQGFTVNQVQKAVPGTRTVNLPGLYANALVKYGATVPATVHAAA) constitute a propeptide, activation peptide. In terms of domain architecture, Peptidase A1 spans 87-394 (YLTPVTIGSS…DSEGPRLGFA (308 aa)). Catalysis depends on residues Asp103 and Asp285. An N-linked (GlcNAc...) asparagine glycan is attached at Asn311. Cysteines 322 and 357 form a disulfide.

It belongs to the peptidase A1 family. Monomer.

Its subcellular location is the secreted. The enzyme catalyses Hydrolysis of proteins with broad specificity similar to that of pepsin A, preferring hydrophobic residues at P1 and P1', but also cleaving 20-Gly-|-Glu-21 in the B chain of insulin. Clots milk, and activates trypsinogen.. In terms of biological role, secreted aspartic endopeptidase that allows assimilation of proteinaceous substrates. The scissile peptide bond is attacked by a nucleophilic water molecule activated by two aspartic residues in the active site. Shows a broad primary substrate specificity. Favors hydrophobic residues at the P1 and P1' positions, but can also activate trypsinogen and hydrolyze the B chain of insulin between positions 'Gly-20' and 'Glu-21'. The polypeptide is Penicillopepsin-1 (Penicillium roqueforti).